The sequence spans 95 residues: Large ribosomal subunit protein bL25 (95 aa).

The protein belongs to the bacterial ribosomal protein bL25 family. As to quaternary structure, part of the 50S ribosomal subunit; part of the 5S rRNA/L5/L18/L25 subcomplex. Contacts the 5S rRNA. Binds to the 5S rRNA independently of L5 and L18.

Its function is as follows. This is one of the proteins that binds to the 5S RNA in the ribosome where it forms part of the central protuberance. This chain is Large ribosomal subunit protein bL25, found in Haemophilus influenzae (strain PittGG).